The following is a 413-amino-acid chain: Elongation factor 1-alpha (413 aa).

Residues 1 to 7, 77 to 81, and 139 to 142 contribute to the GTP site; these read HVDSGKS, DAPGH, and NKMD. Residues 1–228 enclose the tr-type G domain; the sequence is HVDSGKSTTT…DAILPPARPT (228 aa). A 5-glutamyl glycerylphosphorylethanolamine mark is found at glutamate 287 and glutamate 360.

Belongs to the TRAFAC class translation factor GTPase superfamily. Classic translation factor GTPase family. EF-Tu/EF-1A subfamily.

It is found in the cytoplasm. Functionally, this protein promotes the GTP-dependent binding of aminoacyl-tRNA to the A-site of ribosomes during protein biosynthesis. The chain is Elongation factor 1-alpha from Heliocheilus albipunctella (Millet head miner).